A 294-amino-acid chain; its full sequence is Aquaporin NIP2-2 (294 aa).

A run of 2 helical transmembrane segments spans residues 54–74 and 88–108; these read VISE…AASI and SVAG…ISGA. Residues 111–113 carry the NPA 1 motif; the sequence is NPA. 3 helical membrane passes run 129–151, 169–189, and 197–217; these read VPFY…KAVL, ALLI…AVAT, and LAGL…GPVS. Residues 222–224 carry the NPA 2 motif; that stretch reads NPA. Residues 235-255 traverse the membrane as a helical segment; that stretch reads VFTGLWIYFLGPVIGTLSGAW.

Belongs to the MIP/aquaporin (TC 1.A.8) family. NIP (TC 1.A.8.12) subfamily.

The protein localises to the membrane. Functionally, aquaporins facilitate the transport of water and small neutral solutes across cell membranes. The polypeptide is Aquaporin NIP2-2 (NIP2-2) (Zea mays (Maize)).